The primary structure comprises 118 residues: Large ribosomal subunit protein uL18 (118 aa).

This sequence belongs to the universal ribosomal protein uL18 family. In terms of assembly, part of the 50S ribosomal subunit; part of the 5S rRNA/L5/L18/L25 subcomplex. Contacts the 5S and 23S rRNAs.

In terms of biological role, this is one of the proteins that bind and probably mediate the attachment of the 5S RNA into the large ribosomal subunit, where it forms part of the central protuberance. The polypeptide is Large ribosomal subunit protein uL18 (Campylobacter jejuni subsp. doylei (strain ATCC BAA-1458 / RM4099 / 269.97)).